The primary structure comprises 234 residues: MQQGQMAYDRAITVFSPDGRLFQVEYAREAVKKGSTALGIKFKDGVALISEKKVRSRLVEKTSLEKIQLIDDRVAAVTSGLVADARVLIDFARISDQQEKVTYGSLMNIENLVKRVADQMQQYTQYGGVRPYGVSIIFAGLDSIGPRLFDCDPAGTINEYKCVSIGAGKDQVTAYLEKEYKENLSEDEAIRMGIAALKSAVADESSMKEPEIASIKMGETFHVFTSEEVSKYLN.

It belongs to the peptidase T1A family. In terms of assembly, the 20S proteasome core is composed of 14 alpha and 14 beta subunits that assemble into four stacked heptameric rings, resulting in a barrel-shaped structure. The two inner rings, each composed of seven catalytic beta subunits, are sandwiched by two outer rings, each composed of seven alpha subunits. The catalytic chamber with the active sites is on the inside of the barrel. Has a gated structure, the ends of the cylinder being occluded by the N-termini of the alpha-subunits. Is capped at one or both ends by the proteasome regulatory ATPase, PAN.

The protein resides in the cytoplasm. Its activity is regulated as follows. The formation of the proteasomal ATPase PAN-20S proteasome complex, via the docking of the C-termini of PAN into the intersubunit pockets in the alpha-rings, triggers opening of the gate for substrate entry. Interconversion between the open-gate and close-gate conformations leads to a dynamic regulation of the 20S proteasome proteolysis activity. Component of the proteasome core, a large protease complex with broad specificity involved in protein degradation. This is Proteasome subunit alpha from Picrophilus torridus (strain ATCC 700027 / DSM 9790 / JCM 10055 / NBRC 100828 / KAW 2/3).